The following is a 122-amino-acid chain: Large ribosomal subunit protein uL14 (122 aa).

Belongs to the universal ribosomal protein uL14 family. In terms of assembly, part of the 50S ribosomal subunit. Forms a cluster with proteins L3 and L19. In the 70S ribosome, L14 and L19 interact and together make contacts with the 16S rRNA in bridges B5 and B8.

Binds to 23S rRNA. Forms part of two intersubunit bridges in the 70S ribosome. The protein is Large ribosomal subunit protein uL14 of Flavobacterium psychrophilum (strain ATCC 49511 / DSM 21280 / CIP 103535 / JIP02/86).